We begin with the raw amino-acid sequence, 72 residues long: Translation initiation factor IF-1 (72 aa).

The S1-like domain occupies 1 to 72 (MAKEESIEIE…SKGRITYRYK (72 aa)).

It belongs to the IF-1 family. Component of the 30S ribosomal translation pre-initiation complex which assembles on the 30S ribosome in the order IF-2 and IF-3, IF-1 and N-formylmethionyl-tRNA(fMet); mRNA recruitment can occur at any time during PIC assembly.

The protein resides in the cytoplasm. Its function is as follows. One of the essential components for the initiation of protein synthesis. Stabilizes the binding of IF-2 and IF-3 on the 30S subunit to which N-formylmethionyl-tRNA(fMet) subsequently binds. Helps modulate mRNA selection, yielding the 30S pre-initiation complex (PIC). Upon addition of the 50S ribosomal subunit IF-1, IF-2 and IF-3 are released leaving the mature 70S translation initiation complex. This Chlorobium phaeovibrioides (strain DSM 265 / 1930) (Prosthecochloris vibrioformis (strain DSM 265)) protein is Translation initiation factor IF-1.